The primary structure comprises 362 residues: UDP-N-acetylglucosamine--N-acetylmuramyl-(pentapeptide) pyrophosphoryl-undecaprenol N-acetylglucosamine transferase (362 aa).

Residues 14–16, N126, R166, S193, and Q294 each bind UDP-N-acetyl-alpha-D-glucosamine; that span reads TGG.

Belongs to the glycosyltransferase 28 family. MurG subfamily.

It is found in the cell inner membrane. The enzyme catalyses di-trans,octa-cis-undecaprenyl diphospho-N-acetyl-alpha-D-muramoyl-L-alanyl-D-glutamyl-meso-2,6-diaminopimeloyl-D-alanyl-D-alanine + UDP-N-acetyl-alpha-D-glucosamine = di-trans,octa-cis-undecaprenyl diphospho-[N-acetyl-alpha-D-glucosaminyl-(1-&gt;4)]-N-acetyl-alpha-D-muramoyl-L-alanyl-D-glutamyl-meso-2,6-diaminopimeloyl-D-alanyl-D-alanine + UDP + H(+). It functions in the pathway cell wall biogenesis; peptidoglycan biosynthesis. Its function is as follows. Cell wall formation. Catalyzes the transfer of a GlcNAc subunit on undecaprenyl-pyrophosphoryl-MurNAc-pentapeptide (lipid intermediate I) to form undecaprenyl-pyrophosphoryl-MurNAc-(pentapeptide)GlcNAc (lipid intermediate II). This is UDP-N-acetylglucosamine--N-acetylmuramyl-(pentapeptide) pyrophosphoryl-undecaprenol N-acetylglucosamine transferase from Paracoccus denitrificans (strain Pd 1222).